Here is a 143-residue protein sequence, read N- to C-terminus: 16 kDa calcium-binding protein (143 aa).

4 consecutive EF-hand domains span residues 2–37 (SEEKQWTEVFHAIDKDKNGFLTREEIAQCLKEVGVC), 41–71 (ADKIIKETDMNSDGKISLEEYLNALRKLPPR), 73–108 (KCVARWREVFQSIDKDGSGKVSIKELDEFLKTSGMD), and 109–143 (IDQNSLRNWMTQNDKNKDGELDYDEFLAYVRQTYK). Ca(2+) is bound by residues D15, D17, N19, E26, D49, N51, D53, K55, E60, D86, D88, S90, K92, E97, D122, N124, D126, E128, and E133.

Found in eggs.

In terms of biological role, calcium-binding protein. The sequence is that of 16 kDa calcium-binding protein from Schistosoma mansoni (Blood fluke).